Consider the following 277-residue polypeptide: Myelin proteolipid protein (277 aa).

The Cytoplasmic segment spans residues 1 to 10 (MGLLECCARC). S-palmitoyl cysteine attachment occurs at residues cysteine 6, cysteine 7, and cysteine 10. A helical membrane pass occupies residues 11 to 36 (LVGAPFASLVATGLCFFGVALFCGCG). The Extracellular segment spans residues 37-59 (HEALTGTEKLIETYFSKNYQDYE). Residues 60–88 (YLINVIHAFQYVIYGTASFFFLYGALLLA) traverse the membrane as a helical segment. Residues 89-151 (EGFYTTGAVR…LGKWLGHPDK (63 aa)) lie on the Cytoplasmic side of the membrane. The S-palmitoyl cysteine moiety is linked to residue cysteine 109. Position 114 is a phosphoserine (serine 114). Residues threonine 116 and threonine 118 each carry the phosphothreonine modification. S-palmitoyl cysteine attachment occurs at residues cysteine 139 and cysteine 141. The chain crosses the membrane as a helical span at residues 152–178 (FVGITYALTIVWLLVFACSAVPVYIYF). Topologically, residues 179–238 (NTWTTCQSIAFPSKTSASIGSLCADARMYGVLPWNAFPGKVCGSNLLSICKTAEFQMTFH) are extracellular. 2 disulfide bridges follow: cysteine 184/cysteine 228 and cysteine 201/cysteine 220. Serine 199 carries the O-palmitoyl serine lipid modification. Residues 239-268 (LFIAAFVGAAATLVSLLTFMIAATYNFAVL) form a helical membrane-spanning segment. The Cytoplasmic portion of the chain corresponds to 269 to 277 (KLMGRGTKF).

This sequence belongs to the myelin proteolipid protein family.

It is found in the cell membrane. It localises to the myelin membrane. This is the major myelin protein from the central nervous system. It plays an important role in the formation or maintenance of the multilamellar structure of myelin. The sequence is that of Myelin proteolipid protein (PLP1) from Canis lupus familiaris (Dog).